We begin with the raw amino-acid sequence, 121 residues long: Small ribosomal subunit protein uS13 (121 aa).

The disordered stretch occupies residues 94–121; it reads SLPVRGQNTKNNSRTRKGPRRTVANKKK. Basic residues predominate over residues 106–121; it reads SRTRKGPRRTVANKKK.

This sequence belongs to the universal ribosomal protein uS13 family. As to quaternary structure, part of the 30S ribosomal subunit. Forms a loose heterodimer with protein S19. Forms two bridges to the 50S subunit in the 70S ribosome.

In terms of biological role, located at the top of the head of the 30S subunit, it contacts several helices of the 16S rRNA. In the 70S ribosome it contacts the 23S rRNA (bridge B1a) and protein L5 of the 50S subunit (bridge B1b), connecting the 2 subunits; these bridges are implicated in subunit movement. Contacts the tRNAs in the A and P-sites. This Exiguobacterium sp. (strain ATCC BAA-1283 / AT1b) protein is Small ribosomal subunit protein uS13.